The following is a 497-amino-acid chain: Serine/threonine-protein phosphatase 2A 56 kDa regulatory subunit beta isoform (497 aa).

A compositionally biased stretch (low complexity) spans 1-19; sequence METKLPPASTPTSPSSPGL. Disordered stretches follow at residues 1-55 and 473-497; these read METK…YQSN and QGTQGAKEAPVPRPTPQVAASGGQS. 6 positions are modified to phosphoserine: serine 32, serine 35, serine 44, serine 46, serine 47, and serine 48. Over residues 34–45 the composition is skewed to basic residues; sequence RSLRRARPRRSH.

Belongs to the phosphatase 2A regulatory subunit B56 family. As to quaternary structure, component of the serine/threonine-protein phosphatase 2A complex (PP2A). This complex consists of a common heterodimeric core enzyme, composed of a 36 kDa catalytic subunit (subunit C) and a 65 kDa constant scaffold subunit (PR65 or subunit A), that associates with a variety of regulatory subunits. Proteins that associate with the core dimer include three families of regulatory subunits B (the R2/B/PR55/B55, R3/B''/PR72/PR130/PR59 and R5/B'/B56 families), the 48 kDa variable regulatory subunit, viral proteins, and cell signaling molecules. Interacts with SGO1. Interacts with AKT1. Ubiquitinated by CUL3-KLHL15 complex; this modification leads to proteasomal degradation.

It localises to the cytoplasm. As the regulatory component of the serine/threonine-protein phosphatase 2A (PP2A) holoenzyme, modulates substrate specificity, subcellular localization, and responsiveness to phosphorylation. The phosphorylated form mediates the interaction between PP2A and AKT1, leading to AKT1 dephosphorylation. The protein is Serine/threonine-protein phosphatase 2A 56 kDa regulatory subunit beta isoform (Ppp2r5b) of Mus musculus (Mouse).